Consider the following 467-residue polypeptide: Regulatory protein NPR6 (467 aa).

The 85-residue stretch at 27–111 folds into the BTB domain; that stretch reads SDVTFSVEGR…LYSGQVSIVP (85 aa). Residues 117–131 form a C2HC NPR-type zinc finger; that stretch reads RSNCGDRGCWHTHCT. Cys120, Cys125, His127, and Cys130 together coordinate Zn(2+). 4 ANK repeats span residues 247-276, 277-306, 311-340, and 344-378; these read QKIR…LNLD, ESLA…DVNY, TGKT…DPNV, and DGIT…KLRL. The segment at 434 to 467 is disordered; it reads RDIGDDNSNQREGMNLHHHHHDPSTMYHHHHHHF. The segment covering 449–467 has biased composition (basic residues); sequence LHHHHHDPSTMYHHHHHHF.

This sequence belongs to the plant 'ANKYRIN-BTB/POZ' family. 'NOOT-BOP-COCH-like' (NBCL) subfamily. Homodimer or heterodimer with BOP2. Interacts with PAN.

Its subcellular location is the cytoplasm. It is found in the nucleus. It participates in protein modification; protein ubiquitination. Its function is as follows. May act as a substrate-specific adapter of an E3 ubiquitin-protein ligase complex (CUL3-RBX1-BTB) which mediates the ubiquitination and subsequent proteasomal degradation of target proteins. Acts redundantly with BOP2. BOP1/2 promote leaf and floral meristem fate and determinacy in a pathway targeting AP1 and AGL24. BOP1/2 act as transcriptional co-regulators through direct interaction with TGA factors, including PAN, a direct regulator of AP1. Controls lateral organ fate through positive regulation of adaxial-abaxial polarity genes ATHB-14/PHB, YAB1/FIL and YAB3, and through positive regulation of LOB domain-containing genes LOB, LBD6/AS2 and LBD36. Promotes and maintains a developmentally determinate state in leaf cells through the negative regulation of JAG, JGL and class I KNOX genes. Is also involved in nectary development, formation of normal abscission zones (AZs) and suppression of bract formation, probably by regulating the cell wall disorganization. This is Regulatory protein NPR6 from Arabidopsis thaliana (Mouse-ear cress).